Consider the following 276-residue polypeptide: Probable ABC transporter permease protein NosY (276 aa).

The next 6 helical transmembrane spans lie at W20–A40, I55–Y75, I111–V131, F146–G166, L179–L199, and V251–F271.

As to quaternary structure, the complex may be composed of an ATP-binding protein (NosF), a transmembrane protein (NosY) and a solute-binding protein (NosD).

The protein localises to the cell inner membrane. In terms of biological role, required for the assembly of the copper chromophores of nitrous oxide reductase. Could be part of the ABC transporter complex NosDFY. In Stutzerimonas stutzeri (Pseudomonas stutzeri), this protein is Probable ABC transporter permease protein NosY.